We begin with the raw amino-acid sequence, 197 residues long: Dephospho-CoA kinase (197 aa).

Residues 2–197 enclose the DPCK domain; the sequence is IIGITGGIAS…SALLSLANPR (196 aa). An ATP-binding site is contributed by 10-15; that stretch reads ASGKST.

It belongs to the CoaE family.

It is found in the cytoplasm. It catalyses the reaction 3'-dephospho-CoA + ATP = ADP + CoA + H(+). The protein operates within cofactor biosynthesis; coenzyme A biosynthesis; CoA from (R)-pantothenate: step 5/5. Catalyzes the phosphorylation of the 3'-hydroxyl group of dephosphocoenzyme A to form coenzyme A. The chain is Dephospho-CoA kinase from Streptococcus pyogenes serotype M28 (strain MGAS6180).